The following is a 96-amino-acid chain: NADH-ubiquinone oxidoreductase chain 4L (96 aa).

3 helical membrane passes run 1-21 (MELM…ALSL), 27-47 (MLAL…LVMF), and 61-81 (IILL…VVAI).

The protein belongs to the complex I subunit 4L family.

Its subcellular location is the mitochondrion membrane. It catalyses the reaction a ubiquinone + NADH + 5 H(+)(in) = a ubiquinol + NAD(+) + 4 H(+)(out). In terms of biological role, core subunit of the mitochondrial membrane respiratory chain NADH dehydrogenase (Complex I) which catalyzes electron transfer from NADH through the respiratory chain, using ubiquinone as an electron acceptor. Part of the enzyme membrane arm which is embedded in the lipid bilayer and involved in proton translocation. This Lycodon semicarinatus (Ryukyu odd-tooth snake) protein is NADH-ubiquinone oxidoreductase chain 4L (MT-ND4L).